A 130-amino-acid chain; its full sequence is Small ribosomal subunit protein uS8 (130 aa).

It belongs to the universal ribosomal protein uS8 family. Part of the 30S ribosomal subunit.

In terms of biological role, one of the primary rRNA binding proteins, it binds directly to 16S rRNA central domain where it helps coordinate assembly of the platform of the 30S subunit. This Haloarcula marismortui (strain ATCC 43049 / DSM 3752 / JCM 8966 / VKM B-1809) (Halobacterium marismortui) protein is Small ribosomal subunit protein uS8.